Consider the following 556-residue polypeptide: Membrane protein insertase YidC (556 aa).

5 helical membrane passes run 6–26 (IVLY…WQID), 332–352 (LDLT…FSLM), 358–378 (VVGN…LAFY), 428–448 (LGGC…YWVL), and 501–521 (VMMF…SGLV).

Belongs to the OXA1/ALB3/YidC family. Type 1 subfamily. As to quaternary structure, interacts with the Sec translocase complex via SecD. Specifically interacts with transmembrane segments of nascent integral membrane proteins during membrane integration.

It is found in the cell inner membrane. Required for the insertion and/or proper folding and/or complex formation of integral membrane proteins into the membrane. Involved in integration of membrane proteins that insert both dependently and independently of the Sec translocase complex, as well as at least some lipoproteins. Aids folding of multispanning membrane proteins. In Legionella pneumophila (strain Paris), this protein is Membrane protein insertase YidC.